Here is a 386-residue protein sequence, read N- to C-terminus: Histidine decarboxylase (386 aa).

His120 is a binding site for substrate. Residue Lys233 is modified to N6-(pyridoxal phosphate)lysine.

Belongs to the group II decarboxylase family. In terms of assembly, homotetramer. Requires pyridoxal 5'-phosphate as cofactor.

The catalysed reaction is L-histidine + H(+) = histamine + CO2. The sequence is that of Histidine decarboxylase from Vibrio campbellii (strain ATCC BAA-1116).